The primary structure comprises 836 residues: RNA-binding protein 12B-A (836 aa).

An RRM 1 domain is found at 154–229 (PYLFLRGLPY…RFIEVMQGSE (76 aa)). The tract at residues 237-277 (GTATEGGDTPRMRSEEHSPSRRINGRHFRKRSHSKSPRARS) is disordered. A compositionally biased stretch (basic and acidic residues) spans 244 to 255 (DTPRMRSEEHSP). Residues 259 to 277 (INGRHFRKRSHSKSPRARS) show a composition bias toward basic residues. 2 RRM domains span residues 283-359 (FYVH…PVSR) and 401-478 (LCIY…LISE). Disordered regions lie at residues 539-572 (GHFK…PWEE) and 620-644 (SQEH…RRSR). The segment covering 550 to 572 (QSDRRSPEDFRHSPEDYRHPWEE) has biased composition (basic and acidic residues). Serine 703 bears the Phosphoserine mark. At lysine 758 the chain carries N6-acetyllysine. In terms of domain architecture, RRM 4 spans 760–836 (IPVKISNLPF…GPRKVKLSLL (77 aa)).

The protein is RNA-binding protein 12B-A (Rbm12b1) of Mus musculus (Mouse).